The following is a 490-amino-acid chain: Protein nucleotidyltransferase YdiU (490 aa).

The ATP site is built by glycine 94, glycine 96, arginine 97, lysine 117, aspartate 129, glycine 130, arginine 180, and arginine 187. Aspartate 256 serves as the catalytic Proton acceptor. The Mg(2+) site is built by asparagine 257 and aspartate 266. ATP is bound at residue aspartate 266.

Belongs to the SELO family. The cofactor is Mg(2+). Requires Mn(2+) as cofactor.

It catalyses the reaction L-seryl-[protein] + ATP = 3-O-(5'-adenylyl)-L-seryl-[protein] + diphosphate. The catalysed reaction is L-threonyl-[protein] + ATP = 3-O-(5'-adenylyl)-L-threonyl-[protein] + diphosphate. The enzyme catalyses L-tyrosyl-[protein] + ATP = O-(5'-adenylyl)-L-tyrosyl-[protein] + diphosphate. It carries out the reaction L-histidyl-[protein] + UTP = N(tele)-(5'-uridylyl)-L-histidyl-[protein] + diphosphate. It catalyses the reaction L-seryl-[protein] + UTP = O-(5'-uridylyl)-L-seryl-[protein] + diphosphate. The catalysed reaction is L-tyrosyl-[protein] + UTP = O-(5'-uridylyl)-L-tyrosyl-[protein] + diphosphate. Its function is as follows. Nucleotidyltransferase involved in the post-translational modification of proteins. It can catalyze the addition of adenosine monophosphate (AMP) or uridine monophosphate (UMP) to a protein, resulting in modifications known as AMPylation and UMPylation. This is Protein nucleotidyltransferase YdiU from Clostridium perfringens (strain 13 / Type A).